A 770-amino-acid polypeptide reads, in one-letter code: Signal transducer and activator of transcription 3 (770 aa).

At A2 the chain carries N-acetylalanine. N6-acetyllysine occurs at positions 49 and 87. The short motif at 150-162 is the Essential for nuclear import element; that stretch reads DVRKRVQDLEQKM. Residues 580–670 enclose the SH2 domain; it reads WNEGYIMGFI…DATNILVSPL (91 aa). An allysine; alternate mark is found at K601, K615, and K631. An N6-acetyllysine; alternate mark is found at K601, K615, and K631. Position 640 is a phosphotyrosine; by TYK2 (Y640). K685 is subject to Allysine; alternate. An N6-acetyllysine; alternate modification is found at K685. Residue P704 is modified to Phosphotyrosine. A Phosphotyrosine; by FER and PTK6 modification is found at Y705. N6-acetyllysine is present on K707. T714 is modified (phosphothreonine). S727 bears the Phosphoserine; by DYRK2, NLK, NEK6, IRAK1, RPS6KA5, ZIPK/DAPK3 and PKC/PRKCE mark.

This sequence belongs to the transcription factor STAT family. As to quaternary structure, forms a homodimer or a heterodimer with a related family member (at least STAT1). Component of a promoter-binding complex composed of STAT3, NFATC3 and NFATC4; complex formation is enhanced by calcineurin. Interacts with IL31RA, NCOA1, PELP1, SIPAR, SOCS7, STATIP1 and TMF1. Interacts with IL23R in presence of IL23. Interacts (via SH2 domain) with NLK. Interacts with ARL2BP; the interaction is enhanced by LIF and JAK1 expression. Interacts with KPNA4 and KPNA5; KPNA4 may be the primary mediator of nuclear import. Interacts with CAV2; the interaction is increased on insulin-induced tyrosine phosphorylation of CAV2 and leads to STAT3 activation. Interacts with ARL2BP; interaction is enhanced with ARL2. Interacts with NEK6. Binds to CDK9 when activated and nuclear. Interacts with BMX. Interacts with ZIPK/DAPK3. Interacts with PIAS3; the interaction occurs on stimulation by IL6, CNTF or OSM and inhibits the DNA binding activity of STAT3. In prostate cancer cells, interacts with PRKCE and promotes DNA binding activity of STAT3. Interacts with STMN3, antagonizing its microtubule-destabilizing activity. Interacts with the 'Lys-129' acetylated form of BIRC5/survivin. Interacts with FER. Interacts (via SH2 domain) with EIF2AK2/PKR (via the kinase catalytic domain). Interacts with INPP5F; the interaction is independent of STAT3 Tyr-705 phosphorylation status. Interacts with FGFR4. Interacts with OCIAD1. Interacts with OCIAD2. Interacts (unphosphorylated or phosphorylated at Ser-727) with PHB1. Interacts and may form heterodimers with NHLH1. Found in a complex with SLC39A6, SLC39A10 and with the 'Ser-727' phosphorylated form of STAT3 throughout mitosis. Interacts (when phosphorylated at Tyr-705) with CD274/PD-L1; promoting nuclear translocation of CD274/PD-L1. Interacts (when acetylated) with EP300 (via bromo domain); interaction takes place following STAT3 acetylation by EP300 and promotes enhanceosome assembly. Interacts (when acetylated) with BRD2 (via bromo domain); interaction promotes STAT3 recruitment to chromatin and T-helper Th17 cell differentiation. Interacts with FAM220A/SIPAR; the interaction occurs in both the nucleus and the cytoplasm, is enhanced by IL6 and promotes STAT3 dephosphorylation. Interacts in both unphosphorylated and phosphorylated forms with FAM220A but interacts preferentially in the phosphorylated form in the nucleus. Interacts with PTPN2; the interaction is promoted by FAM220A and leads to STAT3 dephosphorylation which negatively regulates STAT3 transcriptional activator activity. (Microbial infection) Interacts with HCV core protein. In terms of assembly, (Microbial infection) Interacts with S.typhimurium SarA. As to quaternary structure, (Microbial infection) Interacts with human cytomegalovirus (HHV-5) immediate early protein IE1; this interaction leads to STAT3 nuclear accumulation and disruption of IL6-induced STAT3 phosphorylation. Tyrosine phosphorylated upon stimulation with EGF. Tyrosine phosphorylated in response to constitutively activated FGFR1, FGFR2, FGFR3 and FGFR4. Activated through tyrosine phosphorylation by BMX. Tyrosine phosphorylated in response to IL6, IL11, LIF, CNTF, KITLG/SCF, CSF1, EGF, PDGF, IFN-alpha, LEP and OSM. Activated KIT promotes phosphorylation on tyrosine residues and subsequent translocation to the nucleus. Phosphorylated on serine upon DNA damage, probably by ATM or ATR. Serine phosphorylation is important for the formation of stable DNA-binding STAT3 homodimers and maximal transcriptional activity. ARL2BP may participate in keeping the phosphorylated state of STAT3 within the nucleus. Upon LPS challenge, phosphorylated within the nucleus by IRAK1. Upon erythropoietin treatment, phosphorylated on Ser-727 by RPS6KA5. Dephosphorylation on tyrosine residues by PTPN2 negatively regulates IL6/interleukin-6 signaling. Phosphorylation at Tyr-705 by PTK6, isoform M2 of PKM (PKM2) or FER leads to an increase of its transcriptional activity. Phosphorylation at Tyr-705 is increased in the presence of calcineurin. Phosphorylation at Tyr-640 by TYK2 negatively regulates transcriptional activity. Post-translationally, acetylated on lysine residues by EP300/p300, promoting its activation. Acetylation at Lys-49 and Lys-87 by EP300/p300 promotes its activation. Acetylation at Lys-87 by EP300/p300 promotes its association with BRD2 and recruitment to chromatin. Deacetylated at Lys-49 and Lys-87 by HDAC1. Acetylation at Lys-685 by EP300/p300 promotes its homodimerization and activation. Deacetylated at Lys-685 by HDAC3. Acetylated on lysine residues by CREBBP. Deacetylation by LOXL3 leads to disrupt STAT3 dimerization and inhibit STAT3 transcription activity. Oxidation of lysine residues to allysine on STAT3 preferentially takes place on lysine residues that are acetylated. In terms of processing, some lysine residues are oxidized to allysine by LOXL3, leading to disrupt STAT3 dimerization and inhibit STAT3 transcription activity. Oxidation of lysine residues to allysine on STAT3 preferentially takes place on lysine residues that are acetylated. (Microbial infection) Phosphorylated on Tyr-705 in the presence of S.typhimurium SarA. As to expression, heart, brain, placenta, lung, liver, skeletal muscle, kidney and pancreas. Expressed in naive CD4(+) T cells as well as T-helper Th17, Th1 and Th2 cells.

Its subcellular location is the cytoplasm. The protein resides in the nucleus. Signal transducer and transcription activator that mediates cellular responses to interleukins, KITLG/SCF, LEP and other growth factors. Once activated, recruits coactivators, such as NCOA1 or MED1, to the promoter region of the target gene. May mediate cellular responses to activated FGFR1, FGFR2, FGFR3 and FGFR4. Upon activation of IL6ST/gp130 signaling by interleukin-6 (IL6), binds to the IL6-responsive elements identified in the promoters of various acute-phase protein genes. Activated by IL31 through IL31RA. Acts as a regulator of inflammatory response by regulating differentiation of naive CD4(+) T-cells into T-helper Th17 or regulatory T-cells (Treg): acetylation promotes its transcription activity and cell differentiation while deacetylation and oxidation of lysine residues by LOXL3 inhibits differentiation. Involved in cell cycle regulation by inducing the expression of key genes for the progression from G1 to S phase, such as CCND1. Mediates the effects of LEP on melanocortin production, body energy homeostasis and lactation. May play an apoptotic role by transctivating BIRC5 expression under LEP activation. Cytoplasmic STAT3 represses macroautophagy by inhibiting EIF2AK2/PKR activity. Plays a crucial role in basal beta cell functions, such as regulation of insulin secretion. Following JAK/STAT signaling activation and as part of a complex with NFATC3 and NFATC4, binds to the alpha-beta E4 promoter region of CRYAB and activates transcription in cardiomyocytes. The polypeptide is Signal transducer and activator of transcription 3 (Homo sapiens (Human)).